A 248-amino-acid polypeptide reads, in one-letter code: Large ribosomal subunit protein uL30 (248 aa).

Residues 22–42 form a disordered region; that stretch reads KSQEKARAERQAEIEKKKAAN. Residues 24–42 are compositionally biased toward basic and acidic residues; the sequence is QEKARAERQAEIEKKKAAN.

It belongs to the universal ribosomal protein uL30 family. Component of the large ribosomal subunit (LSU). Mature N.crassa ribosomes consist of a small (40S) and a large (60S) subunit. The 40S small subunit contains 1 molecule of ribosomal RNA (18S rRNA) and at least 32 different proteins. The large 60S subunit contains 3 rRNA molecules (26S, 5.8S and 5S rRNA) and at least 42 different proteins.

It localises to the cytoplasm. In terms of biological role, component of the ribosome, a large ribonucleoprotein complex responsible for the synthesis of proteins in the cell. The small ribosomal subunit (SSU) binds messenger RNAs (mRNAs) and translates the encoded message by selecting cognate aminoacyl-transfer RNA (tRNA) molecules. The large subunit (LSU) contains the ribosomal catalytic site termed the peptidyl transferase center (PTC), which catalyzes the formation of peptide bonds, thereby polymerizing the amino acids delivered by tRNAs into a polypeptide chain. The nascent polypeptides leave the ribosome through a tunnel in the LSU and interact with protein factors that function in enzymatic processing, targeting, and the membrane insertion of nascent chains at the exit of the ribosomal tunnel. The polypeptide is Large ribosomal subunit protein uL30 (rpl-7) (Neurospora crassa (strain ATCC 24698 / 74-OR23-1A / CBS 708.71 / DSM 1257 / FGSC 987)).